Here is a 790-residue protein sequence, read N- to C-terminus: Probable phosphoketolase (790 aa).

Belongs to the XFP family. Requires thiamine diphosphate as cofactor.

This is Probable phosphoketolase from Nitrosomonas europaea (strain ATCC 19718 / CIP 103999 / KCTC 2705 / NBRC 14298).